A 501-amino-acid chain; its full sequence is Cytochrome P450 76M5 (501 aa).

Residues 5 to 25 form a helical membrane-spanning segment; that stretch reads ELWVLAAALAVSLLYYLAALM. Position 443 (Cys-443) interacts with heme.

This sequence belongs to the cytochrome P450 family. Heme serves as cofactor.

It is found in the membrane. The enzyme catalyses ent-sandaracopimaradien-3beta-ol + reduced [NADPH--hemoprotein reductase] + O2 = oryzalexin E + oxidized [NADPH--hemoprotein reductase] + H2O + H(+). In terms of biological role, enzyme of the diterpenoid metabolism involved in the biosynthesis of the oryzalexin class of phytoalexins. Hydroxylates ent-sandaracopimaradien. This Oryza sativa subsp. japonica (Rice) protein is Cytochrome P450 76M5.